A 368-amino-acid polypeptide reads, in one-letter code: Zinc finger protein 24 (368 aa).

Residue Lys-22 forms a Glycyl lysine isopeptide (Lys-Gly) (interchain with G-Cter in SUMO2) linkage. Lys-27 is covalently cross-linked (Glycyl lysine isopeptide (Lys-Gly) (interchain with G-Cter in SUMO1); alternate). Lys-27 participates in a covalent cross-link: Glycyl lysine isopeptide (Lys-Gly) (interchain with G-Cter in SUMO2); alternate. Residues 52–134 (RQRFRQFGYQ…TVLEDLESEL (83 aa)) form the SCAN box domain. A phosphoserine mark is found at Ser-132 and Ser-142. Glycyl lysine isopeptide (Lys-Gly) (interchain with G-Cter in SUMO2) cross-links involve residues Lys-147, Lys-177, and Lys-236. The C2H2-type 1 zinc finger occupies 251–273 (HICDECGKHFSQGSALILHQRIH). Positions 251-301 (HICDECGKHFSQGSALILHQRIHSGEKPYGCVECGKAFSRSSILVQHQRVH) are necessary and sufficient for nuclear localization. At Ser-274 the chain carries Phosphoserine. Residues Lys-277 and Lys-286 each participate in a glycyl lysine isopeptide (Lys-Gly) (interchain with G-Cter in SUMO2) cross-link. 3 consecutive C2H2-type zinc fingers follow at residues 279-301 (YGCV…QRVH), 307-329 (YKCL…QRIH), and 335-357 (YECV…QRRH). Ser-292 bears the Phosphoserine mark. Residue Tyr-335 is modified to Phosphotyrosine. Residues Lys-361 and Lys-367 each participate in a glycyl lysine isopeptide (Lys-Gly) (interchain with G-Cter in SUMO2) cross-link.

It belongs to the krueppel C2H2-type zinc-finger protein family. Post-translationally, sumoylated.

The protein localises to the nucleus. In terms of biological role, transcription factor required for myelination of differentiated oligodendrocytes. Required for the conversion of oligodendrocytes from the premyelinating to the myelinating state. In the developing central nervous system (CNS), involved in the maintenance in the progenitor stage by promoting the cell cycle. Specifically binds to the 5'-TCAT-3' DNA sequence. Has transcription repressor activity in vitro. In Pongo abelii (Sumatran orangutan), this protein is Zinc finger protein 24 (ZNF24).